Consider the following 485-residue polypeptide: Zinc finger protein 577 (485 aa).

The disordered stretch occupies residues 1-21 (MKNATIVMSVRREQGSSSGEG). In terms of domain architecture, KRAB spans 23-94 (LSFEDVAVGF…EGAAHSQICP (72 aa)). A C2H2-type 1; degenerate zinc finger spans residues 158-180 (HECSVCGRAFSRKAQLIQHQRTE). 7 C2H2-type zinc fingers span residues 186–208 (HGCGECGKTFMRKIQLTEHQRTH), 214–236 (HECSECGKAFSRKSQLMVHQRTH), 242–264 (YRCSKCGKAFSRKCRLNRHQRSH), 270–292 (YGCSVCGKAFSQKAYLTAHQRLH), 298–320 (YKCSDCGRTFYFKSDLTRHQRIH), 326–348 (YECSECEKAFRSKSKLIQHQRTH), and 354–376 (YSCRECGKAFAHMSVLIKHEKTH).

It belongs to the krueppel C2H2-type zinc-finger protein family.

Its subcellular location is the nucleus. Functionally, may be involved in transcriptional regulation. The polypeptide is Zinc finger protein 577 (ZNF577) (Homo sapiens (Human)).